Here is a 493-residue protein sequence, read N- to C-terminus: 1-aminocyclopropane-1-carboxylate synthase 1 (493 aa).

Position 279 is an N6-(pyridoxal phosphate)lysine (Lys-279).

Belongs to the class-I pyridoxal-phosphate-dependent aminotransferase family. In terms of assembly, homodimer. Requires pyridoxal 5'-phosphate as cofactor.

It carries out the reaction S-adenosyl-L-methionine = 1-aminocyclopropane-1-carboxylate + S-methyl-5'-thioadenosine + H(+). Its pathway is alkene biosynthesis; ethylene biosynthesis via S-adenosyl-L-methionine; ethylene from S-adenosyl-L-methionine: step 1/2. Its function is as follows. Catalyzes the formation of 1-aminocyclopropane-1-carboxylate, a direct precursor of ethylene in higher plants. The chain is 1-aminocyclopropane-1-carboxylate synthase 1 (ACC1A) from Cucurbita pepo (Vegetable marrow).